A 278-amino-acid chain; its full sequence is Transcriptional regulator ICP22 homolog (278 aa).

Disordered stretches follow at residues 1–42 (MFCT…RDTS) and 154–229 (CDVS…KRPQ). Residues 1 to 142 (MFCTSPATRG…PRGEDGFIEA (142 aa)) form an IE62-binding region. 2 stretches are compositionally biased toward acidic residues: residues 155–169 (DVSD…DDDG) and 183–205 (AESS…DSCE).

It belongs to the herpesviridae ICP22 family. Interacts with IE62; this interaction modulates the function of IE62. Interacts with several components of host pre-initiation complex including GTF2E1, GTF2H2 and POLR2A; these interactions lead to repression of gene transcription. Interacts with host ASF1A; altering its ability to bind histones. Post-translationally, phosphorylated in vitro by host and by protein kinase ORF47.

The protein resides in the host cytoplasm. It is found in the host nucleus. The protein localises to the virion tegument. Functionally, immediate early (EI) protein that functions as a transcriptional regulator of cellular and viral mRNAs mainly by interacting with several general transcription factors thereby disorganizing the preinitiation complex at certain promoters. May additionally help to regulate levels of histones in virus-infected cells by interacting with host ASF1. By inhibiting host transcriptional program, IE63 plays a major role in the ability of VZV to overcome the innate immune response to the virus. This is Transcriptional regulator ICP22 homolog from Varicella-zoster virus (strain Dumas) (HHV-3).